The chain runs to 342 residues: GTPase Obg (342 aa).

Positions 1–159 constitute an Obg domain; sequence MKFLDLCKVY…RTIWLRLKLI (159 aa). Residues 160 to 327 enclose the OBG-type G domain; that stretch reads ADAGLLGLPN…VLRALWAEID (168 aa). GTP-binding positions include 166-173, 191-195, 212-215, 279-282, and 308-310; these read GLPNAGKS, FTTLV, DIPG, NKID, and SGV. Positions 173 and 193 each coordinate Mg(2+).

It belongs to the TRAFAC class OBG-HflX-like GTPase superfamily. OBG GTPase family. In terms of assembly, monomer. The cofactor is Mg(2+).

The protein localises to the cytoplasm. Its function is as follows. An essential GTPase which binds GTP, GDP and possibly (p)ppGpp with moderate affinity, with high nucleotide exchange rates and a fairly low GTP hydrolysis rate. Plays a role in control of the cell cycle, stress response, ribosome biogenesis and in those bacteria that undergo differentiation, in morphogenesis control. The sequence is that of GTPase Obg from Cereibacter sphaeroides (strain KD131 / KCTC 12085) (Rhodobacter sphaeroides).